The sequence spans 207 residues: MQITLLFHTPLSVCSHATRTCWQSFEKGDCGGEKDKELIDRVGNKFKHASTLEHLNYTFYIQGISRACLQEVARHRHTSPSVKSTRYTLKELRNEAEFKIGDFENASRYLVLCGNEEVDNASIKALENLRTILQKSISLDIAKYCLPESYKTELTLTINARSLQNFISLRSSKSALWEIRNLANALFEALPQEHKFIFEHCLHKDIE.

Positions 1 to 204 constitute a ThyX domain; it reads MQITLLFHTP…KFIFEHCLHK (204 aa). Residues Ser50 and 74–76 each bind FAD; that span reads RHR. DUMP is bound by residues 71-74, 84-86, and Lys143; these read EVAR and STR. Positions 74-84 match the ThyX motif motif; it reads RHRHTSPSVKS. Residues 159–161 and Asn165 contribute to the FAD site; that span reads NAR. Arg170 contacts dUMP. Residue Arg170 is the Involved in ionization of N3 of dUMP, leading to its activation of the active site.

It belongs to the thymidylate synthase ThyX family. In terms of assembly, homotetramer. It depends on FAD as a cofactor.

It catalyses the reaction dUMP + (6R)-5,10-methylene-5,6,7,8-tetrahydrofolate + NADPH + H(+) = dTMP + (6S)-5,6,7,8-tetrahydrofolate + NADP(+). It functions in the pathway pyrimidine metabolism; dTTP biosynthesis. Catalyzes the reductive methylation of 2'-deoxyuridine-5'-monophosphate (dUMP) to 2'-deoxythymidine-5'-monophosphate (dTMP) while utilizing 5,10-methylenetetrahydrofolate (mTHF) as the methyl donor, and NADPH and FADH(2) as the reductant. The sequence is that of Flavin-dependent thymidylate synthase from Campylobacter jejuni subsp. jejuni serotype O:2 (strain ATCC 700819 / NCTC 11168).